A 288-amino-acid polypeptide reads, in one-letter code: Pantothenate synthetase (288 aa).

30 to 37 is a binding site for ATP; the sequence is MGNLHEGH. His-37 acts as the Proton donor in catalysis. Gln-61 contacts (R)-pantoate. Gln-61 serves as a coordination point for beta-alanine. Position 148–151 (148–151) interacts with ATP; it reads GQKD. Residue Gln-154 coordinates (R)-pantoate. ATP-binding positions include Val-177 and 185–188; that span reads LSSR.

The protein belongs to the pantothenate synthetase family. Homodimer.

Its subcellular location is the cytoplasm. It catalyses the reaction (R)-pantoate + beta-alanine + ATP = (R)-pantothenate + AMP + diphosphate + H(+). It participates in cofactor biosynthesis; (R)-pantothenate biosynthesis; (R)-pantothenate from (R)-pantoate and beta-alanine: step 1/1. Functionally, catalyzes the condensation of pantoate with beta-alanine in an ATP-dependent reaction via a pantoyl-adenylate intermediate. This Psychrobacter arcticus (strain DSM 17307 / VKM B-2377 / 273-4) protein is Pantothenate synthetase.